The following is a 188-amino-acid chain: Accessory gene regulator protein B (188 aa).

A run of 4 helical transmembrane segments spans residues leucine 49–leucine 69, isoleucine 104–alanine 126, isoleucine 143–tyrosine 163, and phenylalanine 166–glutamate 186.

This sequence belongs to the AgrB family.

The protein localises to the cell membrane. Functionally, essential for the production of a quorum sensing system signal molecule, the autoinducing peptide (AIP). This quorum sensing system is responsible for the regulation of the expression of virulence factor genes. Involved in the proteolytic processing of AgrD, the precursor of AIP. This Staphylococcus intermedius protein is Accessory gene regulator protein B.